The sequence spans 541 residues: Membrane protein insertase YidC (541 aa).

Helical transmembrane passes span 6 to 26 (NILL…WQAD), 325 to 345 (LVVD…LLMF), 349 to 369 (FVGN…GLLF), 420 to 440 (GGCL…WVLL), 457 to 477 (LSVQ…MFVM), and 500 to 520 (VIFT…WLVG).

This sequence belongs to the OXA1/ALB3/YidC family. Type 1 subfamily. In terms of assembly, interacts with the Sec translocase complex via SecD. Specifically interacts with transmembrane segments of nascent integral membrane proteins during membrane integration.

The protein resides in the cell inner membrane. Its function is as follows. Required for the insertion and/or proper folding and/or complex formation of integral membrane proteins into the membrane. Involved in integration of membrane proteins that insert both dependently and independently of the Sec translocase complex, as well as at least some lipoproteins. Aids folding of multispanning membrane proteins. This Shewanella baltica (strain OS223) protein is Membrane protein insertase YidC.